The chain runs to 122 residues: MARIAGVNIPSNKRVCIALTYIYGIGRTKAGEICERTGIAENRRVNDLSDDEVVRIREIIDSEYKVEGDLRREVAMNIKRIMDLGCYRGLRHRKGLPVRGQRTHTNARTRKGPAKPIAGKKK.

The interval 95–122 (GLPVRGQRTHTNARTRKGPAKPIAGKKK) is disordered.

It belongs to the universal ribosomal protein uS13 family. In terms of assembly, part of the 30S ribosomal subunit. Forms a loose heterodimer with protein S19. Forms two bridges to the 50S subunit in the 70S ribosome.

Located at the top of the head of the 30S subunit, it contacts several helices of the 16S rRNA. In the 70S ribosome it contacts the 23S rRNA (bridge B1a) and protein L5 of the 50S subunit (bridge B1b), connecting the 2 subunits; these bridges are implicated in subunit movement. Contacts the tRNAs in the A and P-sites. This Rhodospirillum rubrum (strain ATCC 11170 / ATH 1.1.1 / DSM 467 / LMG 4362 / NCIMB 8255 / S1) protein is Small ribosomal subunit protein uS13.